A 542-amino-acid polypeptide reads, in one-letter code: CTP synthase (542 aa).

The segment at M1–L265 is amidoligase domain. S13 is a binding site for CTP. A UTP-binding site is contributed by S13. ATP contacts are provided by residues S14–I19 and D71. Residues D71 and E139 each contribute to the Mg(2+) site. CTP contacts are provided by residues D146–E148, K186–Q191, and K222. UTP-binding positions include K186–Q191 and K222. Positions T290–G541 constitute a Glutamine amidotransferase type-1 domain. G351 is an L-glutamine binding site. Residue C378 is the Nucleophile; for glutamine hydrolysis of the active site. L-glutamine-binding positions include L379–Q382, E402, and R469. Residues H514 and E516 contribute to the active site.

It belongs to the CTP synthase family. As to quaternary structure, homotetramer.

It carries out the reaction UTP + L-glutamine + ATP + H2O = CTP + L-glutamate + ADP + phosphate + 2 H(+). The enzyme catalyses L-glutamine + H2O = L-glutamate + NH4(+). The catalysed reaction is UTP + NH4(+) + ATP = CTP + ADP + phosphate + 2 H(+). Its pathway is pyrimidine metabolism; CTP biosynthesis via de novo pathway; CTP from UDP: step 2/2. Its activity is regulated as follows. Allosterically activated by GTP, when glutamine is the substrate; GTP has no effect on the reaction when ammonia is the substrate. The allosteric effector GTP functions by stabilizing the protein conformation that binds the tetrahedral intermediate(s) formed during glutamine hydrolysis. Inhibited by the product CTP, via allosteric rather than competitive inhibition. Catalyzes the ATP-dependent amination of UTP to CTP with either L-glutamine or ammonia as the source of nitrogen. Regulates intracellular CTP levels through interactions with the four ribonucleotide triphosphates. The sequence is that of CTP synthase from Hahella chejuensis (strain KCTC 2396).